A 266-amino-acid chain; its full sequence is MKLSLSPPPYADTPVVVLISGLGGSGSYWLPQLAVLEQEYQVVCYDQRGTGNNPDTLAEDYSIAQMAAELHQALVAAGIEHYAVVGHALGALVGMQLALDYPASVTVLISVNGWLRINAHTRRCFQVRERLLYSGGAQAWVEAQPLFLYPADWMAARAPRLEAEDALALAHFQGKNNLLRRLNALKRADFSHHADRIRCPVQIICASDDLLVPSACSSELHAALPDSQKMVMPYGGHACNVTDPETFNALLLNGLASLLHHREAAL.

It belongs to the AB hydrolase superfamily. Hydrolase RutD family.

The enzyme catalyses carbamate + 2 H(+) = NH4(+) + CO2. Involved in pyrimidine catabolism. May facilitate the hydrolysis of carbamate, a reaction that can also occur spontaneously. This chain is Putative carbamate hydrolase RutD, found in Escherichia coli O26:H11 (strain 11368 / EHEC).